A 290-amino-acid chain; its full sequence is MWTPPRNDQHYLNWQWYSSILSSHAAMCGCPDAVAHFNHLASVLRAPQNPPPPGPQRNLPLRRLPALPAAPEAPGDRAPWPMAGGAEGEDGGAGGDADHGGAAGGPEDADLLDAVAAAETRPQETQEGHRGVPLQPRRGAKRKLTFPPSQAPQTSPPVGRLAAGGKRVAKLRGRDTDRLPAAQAAAAATANPGSQTQTPLQPSPKNPTKSRYQPYLVTKGGGSSILISNSTINMFGDPKPYNPSSNDWKEEYEACRIWDRPPRGNLRDTPYYPWAPKENQYRVNFKLGFQ.

The segment at 67–210 is disordered; it reads LPAAPEAPGD…QPSPKNPTKS (144 aa). Residues 121–130 show a composition bias toward basic and acidic residues; sequence RPQETQEGHR. A compositionally biased stretch (low complexity) spans 181–190; that stretch reads AAQAAAAATA. A compositionally biased stretch (polar residues) spans 191–200; the sequence is NPGSQTQTPL.

This is an uncharacterized protein from Homo sapiens (Human).